A 153-amino-acid chain; its full sequence is Pheromone-binding protein Gp-9 (153 aa).

The N-terminal stretch at 1–19 (MKTFVLHIFIFALVAFASA) is a signal peptide. Cystine bridges form between cysteine 37–cysteine 77, cysteine 73–cysteine 129, and cysteine 118–cysteine 138.

This sequence belongs to the PBP/GOBP family. Homodimer.

Its subcellular location is the secreted. Its function is as follows. Colony queen number, a major feature of social organization, is associated with worker genotype for Gp-9. Colonies are headed by either a single reproductive queen (monogyne form) or multiple queens (polygyne form). Differences in worker Gp-9 genotypes between social forms may cause differences in workers' abilities to recognize queens and regulate their numbers. This chain is Pheromone-binding protein Gp-9, found in Solenopsis electra (Fire ant).